A 158-amino-acid chain; its full sequence is uncharacterized protein (158 aa).

Positions 1–22 (MKKIPNKLLAVSAFLTITTTYA) are cleaved as a signal peptide. Residues 120 to 140 (LTGIIEYDTKFENHYETLVEA) form a helical membrane-spanning segment.

The protein localises to the cell membrane. This is an uncharacterized protein from Bacillus cereus.